Here is a 525-residue protein sequence, read N- to C-terminus: GMP synthase [glutamine-hydrolyzing] (525 aa).

Residues 9-207 form the Glutamine amidotransferase type-1 domain; it reads RILILDFGSQ…VRDICQCEAL (199 aa). Residue Cys86 is the Nucleophile of the active site. Catalysis depends on residues His181 and Glu183. The GMPS ATP-PPase domain occupies 208 to 400; sequence WTPAKIIDDA…LGLPYDMLYR (193 aa). An ATP-binding site is contributed by 235 to 241; that stretch reads SGGVDSS.

Homodimer.

The catalysed reaction is XMP + L-glutamine + ATP + H2O = GMP + L-glutamate + AMP + diphosphate + 2 H(+). Its pathway is purine metabolism; GMP biosynthesis; GMP from XMP (L-Gln route): step 1/1. Its function is as follows. Catalyzes the synthesis of GMP from XMP. This Shigella flexneri serotype 5b (strain 8401) protein is GMP synthase [glutamine-hydrolyzing].